Here is a 243-residue protein sequence, read N- to C-terminus: UDP-2,3-diacylglucosamine hydrolase (243 aa).

The Mn(2+) site is built by aspartate 8, histidine 10, aspartate 41, asparagine 79, and histidine 114. 79–80 (NR) contacts substrate. Aspartate 122, lysine 164, lysine 167, and histidine 195 together coordinate substrate. The Mn(2+) site is built by histidine 195 and histidine 197.

It belongs to the LpxH family. It depends on Mn(2+) as a cofactor.

Its subcellular location is the cell inner membrane. The enzyme catalyses UDP-2-N,3-O-bis[(3R)-3-hydroxytetradecanoyl]-alpha-D-glucosamine + H2O = 2-N,3-O-bis[(3R)-3-hydroxytetradecanoyl]-alpha-D-glucosaminyl 1-phosphate + UMP + 2 H(+). It participates in glycolipid biosynthesis; lipid IV(A) biosynthesis; lipid IV(A) from (3R)-3-hydroxytetradecanoyl-[acyl-carrier-protein] and UDP-N-acetyl-alpha-D-glucosamine: step 4/6. Hydrolyzes the pyrophosphate bond of UDP-2,3-diacylglucosamine to yield 2,3-diacylglucosamine 1-phosphate (lipid X) and UMP by catalyzing the attack of water at the alpha-P atom. Involved in the biosynthesis of lipid A, a phosphorylated glycolipid that anchors the lipopolysaccharide to the outer membrane of the cell. This is UDP-2,3-diacylglucosamine hydrolase from Vibrio vulnificus (strain CMCP6).